The chain runs to 207 residues: Vexin (207 aa).

Residues 56-100 are disordered; sequence ELLPHRGDRRDPGDRRRFGRLQTARPPTAHPAKASARPVGISEPK. Residues 58–71 are compositionally biased toward basic and acidic residues; that stretch reads LPHRGDRRDPGDRR.

It belongs to the vexin family.

It localises to the cell membrane. Its subcellular location is the nucleus. Functionally, required for neurogenesis in the neural plate and retina. Strongly cooperates with neural bHLH factors to promote neurogenesis. The chain is Vexin from Homo sapiens (Human).